The following is a 764-amino-acid chain: 5-methyltetrahydropteroyltriglutamate--homocysteine methyltransferase (764 aa).

5-methyltetrahydropteroyltri-L-glutamate-binding positions include Arg-16–Lys-19 and Lys-121. L-homocysteine is bound by residues Ile-440–Ser-442 and Glu-493. Residues Ile-440–Ser-442 and Glu-493 contribute to the L-methionine site. Residues Arg-524 to Cys-525 and Trp-570 contribute to the 5-methyltetrahydropteroyltri-L-glutamate site. An L-homocysteine-binding site is contributed by Asp-608. Asp-608 is a binding site for L-methionine. A 5-methyltetrahydropteroyltri-L-glutamate-binding site is contributed by Glu-614. 3 residues coordinate Zn(2+): His-650, Cys-652, and Glu-674. His-703 serves as the catalytic Proton donor. Zn(2+) is bound at residue Cys-735.

The protein belongs to the vitamin-B12 independent methionine synthase family. Requires Zn(2+) as cofactor.

The enzyme catalyses 5-methyltetrahydropteroyltri-L-glutamate + L-homocysteine = tetrahydropteroyltri-L-glutamate + L-methionine. Its pathway is amino-acid biosynthesis; L-methionine biosynthesis via de novo pathway; L-methionine from L-homocysteine (MetE route): step 1/1. Catalyzes the transfer of a methyl group from 5-methyltetrahydrofolate to homocysteine resulting in methionine formation. The polypeptide is 5-methyltetrahydropteroyltriglutamate--homocysteine methyltransferase (Burkholderia cenocepacia (strain HI2424)).